The chain runs to 242 residues: Lysosomal membrane ascorbate-dependent ferrireductase CYB561A3 (242 aa).

The Cytoplasmic segment spans residues M1–Y7. A helical transmembrane segment spans residues L8–M28. The Cytochrome b561 domain maps to L12–L219. Topologically, residues Q29–N45 are lumenal. The N-linked (GlcNAc...) asparagine glycan is linked to N38. A helical transmembrane segment spans residues W46–Y66. Heme b contacts are provided by H47 and R67. Over R67–H83 the chain is Cytoplasmic. L-ascorbate is bound by residues K76 and K80. Residue H83 participates in heme b binding. Residues A84 to F104 form a helical membrane-spanning segment. Over H105 to W119 the chain is Lumenal. Residues N112–S115 and H117 each bind heme b. A helical membrane pass occupies residues L120 to L140. Residues L141 to P154 lie on the Cytoplasmic side of the membrane. R149 is an L-ascorbate binding site. A helical transmembrane segment spans residues I155–I175. Residues H156 and E177 each contribute to the heme b site. At N176 to S202 the chain is on the lumenal side. A helical membrane pass occupies residues T203–W223. K224 contributes to the heme b binding site. Residues K224–E242 are Cytoplasmic-facing.

In terms of assembly, homodimer. The cofactor is heme b. In terms of processing, N-glycosylated.

It localises to the late endosome membrane. The protein resides in the lysosome membrane. The enzyme catalyses Fe(3+)(out) + L-ascorbate(in) = monodehydro-L-ascorbate radical(in) + Fe(2+)(out) + H(+). Its function is as follows. Transmembrane reductase that uses ascorbate as an electron donor in the cytoplasm and transfers electrons across membranes to reduce iron cations Fe(3+) into Fe(2+) in the lumen of the late endosome and lysosome. Reduced iron can then be extruded from the late endosome and lysosome to the cytoplasm by divalent metal-specific transporters. It is therefore most probably involved in endosomal and lysosomal cellular iron homeostasis. The chain is Lysosomal membrane ascorbate-dependent ferrireductase CYB561A3 from Homo sapiens (Human).